The following is a 217-amino-acid chain: 3,4-dihydroxy-2-butanone 4-phosphate synthase (217 aa).

Residues 37-38, Asp42, 150-154, and Glu174 contribute to the D-ribulose 5-phosphate site; these read RE and RRGHT. Residue Glu38 coordinates Mg(2+). His153 is a binding site for Mg(2+).

Belongs to the DHBP synthase family. Homodimer. Requires Mg(2+) as cofactor. It depends on Mn(2+) as a cofactor.

It catalyses the reaction D-ribulose 5-phosphate = (2S)-2-hydroxy-3-oxobutyl phosphate + formate + H(+). It functions in the pathway cofactor biosynthesis; riboflavin biosynthesis; 2-hydroxy-3-oxobutyl phosphate from D-ribulose 5-phosphate: step 1/1. Its function is as follows. Catalyzes the conversion of D-ribulose 5-phosphate to formate and 3,4-dihydroxy-2-butanone 4-phosphate. This chain is 3,4-dihydroxy-2-butanone 4-phosphate synthase, found in Yersinia enterocolitica serotype O:8 / biotype 1B (strain NCTC 13174 / 8081).